A 137-amino-acid polypeptide reads, in one-letter code: 2-iminobutanoate/2-iminopropanoate deaminase (137 aa).

Ser-2 carries the post-translational modification N-acetylserine. Residues Lys-13 and Lys-67 each carry the N6-succinyllysine modification. Thr-74 carries the post-translational modification Phosphothreonine. The residue at position 136 (Ser-136) is a Phosphoserine.

Homotrimer. Interacts with YTHDF2. Expressed by various malignant neoplasms.

The protein resides in the cytoplasm. The protein localises to the nucleus. Its subcellular location is the peroxisome. It is found in the mitochondrion. It catalyses the reaction 2-iminobutanoate + H2O = 2-oxobutanoate + NH4(+). It carries out the reaction 2-iminopropanoate + H2O = pyruvate + NH4(+). Catalyzes the hydrolytic deamination of enamine/imine intermediates that form during the course of normal metabolism. May facilitate the release of ammonia from these potentially toxic reactive metabolites, reducing their impact on cellular components. It may act on enamine/imine intermediates formed by several types of pyridoxal-5'-phosphate-dependent dehydratases including L-threonine dehydratase. Its function is as follows. Also promotes endoribonucleolytic cleavage of some transcripts by promoting recruitment of the ribonuclease P/MRP complex. Acts by bridging YTHDF2 and the ribonuclease P/MRP complex. RIDA/HRSP12 binds to N6-methyladenosine (m6A)-containing mRNAs containing a 5'-GGUUC-3' motif: cooperative binding of RIDA/HRSP12 and YTHDF2 to such transcripts lead to recruitment of the ribonuclease P/MRP complex and subsequent endoribonucleolytic cleavage. The sequence is that of 2-iminobutanoate/2-iminopropanoate deaminase from Capra hircus (Goat).